A 1325-amino-acid polypeptide reads, in one-letter code: Nonribosomal peptide synthetase (1325 aa).

The segment at 248-644 (YQQLDRLSTR…LGEIEYQIQQ (397 aa)) is adenylation. Residues 779–856 (EIVNPGEITL…DQARLLRPLS (78 aa)) enclose the Carrier domain. Residue Ser-816 is modified to O-(pantetheine 4'-phosphoryl)serine. A condensation region spans residues 893-1310 (EDVYPCTPLQ…DDYSTTLHTL (418 aa)).

This sequence belongs to the NRP synthetase family. The cofactor is pantetheine 4'-phosphate.

Its pathway is antifungal biosynthesis. In terms of biological role, nonribosomal peptide synthetase; part of the gene cluster that mediates the biosynthesis of the tetrahydropyranyl antifungal agent lanomycin that acts as an inhibitor of CYP51 and blocks the ergosterol biosynthesis. The biosynthesis probably begins with the formation of an hexaketide, followed by methionine mediated alkylation of C-2 and C-6, and methylation of the reduced C-3 oxygen, pyran forming reductive ring closure, oxygenation of C-4, beta-keto reduction, enoyl reduction and dehydration of the remaining oxygens, and finally, acylation with glycine to complete the biosynthesis. This Pyrenophora dematioidea (Helminthosporium dematioideum) protein is Nonribosomal peptide synthetase.